We begin with the raw amino-acid sequence, 521 residues long: Protein nucleotidyltransferase YdiU (521 aa).

Positions 109, 111, 112, 131, 143, 144, 194, and 201 each coordinate ATP. Aspartate 270 functions as the Proton acceptor in the catalytic mechanism. Positions 271 and 280 each coordinate Mg(2+). ATP is bound at residue aspartate 280.

The protein belongs to the SELO family. Mg(2+) is required as a cofactor. It depends on Mn(2+) as a cofactor.

The catalysed reaction is L-seryl-[protein] + ATP = 3-O-(5'-adenylyl)-L-seryl-[protein] + diphosphate. The enzyme catalyses L-threonyl-[protein] + ATP = 3-O-(5'-adenylyl)-L-threonyl-[protein] + diphosphate. It carries out the reaction L-tyrosyl-[protein] + ATP = O-(5'-adenylyl)-L-tyrosyl-[protein] + diphosphate. It catalyses the reaction L-histidyl-[protein] + UTP = N(tele)-(5'-uridylyl)-L-histidyl-[protein] + diphosphate. The catalysed reaction is L-seryl-[protein] + UTP = O-(5'-uridylyl)-L-seryl-[protein] + diphosphate. The enzyme catalyses L-tyrosyl-[protein] + UTP = O-(5'-uridylyl)-L-tyrosyl-[protein] + diphosphate. Nucleotidyltransferase involved in the post-translational modification of proteins. It can catalyze the addition of adenosine monophosphate (AMP) or uridine monophosphate (UMP) to a protein, resulting in modifications known as AMPylation and UMPylation. This chain is Protein nucleotidyltransferase YdiU, found in Burkholderia thailandensis (strain ATCC 700388 / DSM 13276 / CCUG 48851 / CIP 106301 / E264).